Reading from the N-terminus, the 775-residue chain is Tumor necrosis factor alpha-induced protein 3 (775 aa).

Position 2 is an N-acetylalanine (A2). Residues 58–300 (PQFREIIHKA…LTDPENEMKE (243 aa)) are TRAF-binding. The 172-residue stretch at 92–263 (LVALKTNGDG…SQHFVPLVTL (172 aa)) folds into the OTU domain. D100 is an active-site residue. C103 serves as the catalytic Nucleophile. 3 interaction with ubiquitin regions span residues 157–159 (LCY), 190–192 (SLE), and 224–227 (FAPL). The active-site Proton acceptor is H256. The interaction with TNIP1 stretch occupies residues 369 to 775 (AQNPLEPSTP…ECYQFKQMYG (407 aa)). The A20-type 1 zinc finger occupies 381–416 (SLMDIKCETPNCPFFMSVNTQPLCHECSERRQKNQS). Residues 386-445 (KCETPNCPFFMSVNTQPLCHECSERRQKNQSKLPKLNSKLGPEGLPGVGLGSSNWSPEET) form an interaction with RIPK1 region. Positions 387, 392, 404, and 407 each coordinate Zn(2+). Positions 415-455 (QSKLPKLNSKLGPEGLPGVGLGSSNWSPEETAGGPHSAPPT) are disordered. The residue at position 451 (S451) is a Phosphoserine. A20-type zinc fingers lie at residues 464-499 (ETTA…NASH) and 500-533 (TADP…AEPS). The Zn(2+) site is built by C470, C475, C487, C490, C506, C509, C521, and C524. Over residues 567–580 (TGNVSPSGCLSQAA) the composition is skewed to polar residues. A disordered region spans residues 567-590 (TGNVSPSGCLSQAARTPGDRAGTS). 4 A20-type zinc fingers span residues 586–621 (RAGT…ENKQ), 636–671 (FQNN…NQRF), 695–730 (VASR…RVGS), and 741–775 (EPPK…QMYG). The segment at 590-640 (SKCRKAGCMYFGTPENKGFCTLCFIEYRENKQSVTASEKAGSPAPRFQNNV) is required for proteasomal degradation of UBE2N and UBE2D3, TRAF6 deubiquitination, and TAX1BP1 interaction with UBE2N. Residues 591–775 (KCRKAGCMYF…ECYQFKQMYG (185 aa)) form a sufficient for inhibitory activity of TNF-induced NF-kappa-B activity region. Zn(2+) is bound by residues C592, C597, C609, C612, C642, C647, C659, C662, C701, C706, C718, C721, C747, C752, C764, and C767. Positions 682–775 (RSSQHRDMPR…ECYQFKQMYG (94 aa)) are required for lysosomal localization and for TRAF2 lysosomal degradation.

This sequence belongs to the peptidase C64 family. Homodimer. Interacts with TNIP1, TAX1BP1 and TRAF2. Interacts with RNF11, ITCH and TAX1BP1 only after TNF stimulation; these interaction are transient and they are lost after 1 hour of stimulation with TNF. Interacts with YWHAZ and YWHAH. Interacts with IKBKG; the interaction is induced by TNF stimulation and by polyubiquitin. Interacts with RIPK1. Interacts with UBE2N; the interaction requires TAX1BP1. Interacts with TRAF6. In terms of tissue distribution, found in most tissues during development. Strikingly high levels are found in lymphoid organs, including the thymus, spleen, and gut-associated lymphoid tissue. Constitutively expressed in immature and mature thymocyte subpopulations as well as in resting peripheral T-cells; activation of these leads to down-regulation.

The protein localises to the cytoplasm. It is found in the nucleus. It localises to the lysosome. The catalysed reaction is Thiol-dependent hydrolysis of ester, thioester, amide, peptide and isopeptide bonds formed by the C-terminal Gly of ubiquitin (a 76-residue protein attached to proteins as an intracellular targeting signal).. Ubiquitin-editing enzyme that contains both ubiquitin ligase and deubiquitinase activities. Involved in immune and inflammatory responses signaled by cytokines, such as TNF-alpha and IL-1 beta, or pathogens via Toll-like receptors (TLRs) through terminating NF-kappa-B activity. Essential component of a ubiquitin-editing protein complex, comprising also RNF11, ITCH and TAX1BP1, that ensures the transient nature of inflammatory signaling pathways. In cooperation with TAX1BP1 promotes disassembly of E2-E3 ubiquitin protein ligase complexes in IL-1R and TNFR-1 pathways; affected are at least E3 ligases TRAF6, TRAF2 and BIRC2, and E2 ubiquitin-conjugating enzymes UBE2N and UBE2D3. In cooperation with TAX1BP1 promotes ubiquitination of UBE2N and proteasomal degradation of UBE2N and UBE2D3. Upon TNF stimulation, deubiquitinates 'Lys-63'-polyubiquitin chains on RIPK1 and catalyzes the formation of 'Lys-48'-polyubiquitin chains. This leads to RIPK1 proteasomal degradation and consequently termination of the TNF- or LPS-mediated activation of NF-kappa-B. Deubiquitinates TRAF6 probably acting on 'Lys-63'-linked polyubiquitin. Upon T-cell receptor (TCR)-mediated T-cell activation, deubiquitinates 'Lys-63'-polyubiquitin chains on MALT1 thereby mediating disassociation of the CBM (CARD11:BCL10:MALT1) and IKK complexes and preventing sustained IKK activation. Deubiquitinates NEMO/IKBKG; the function is facilitated by TNIP1 and leads to inhibition of NF-kappa-B activation. Upon stimulation by bacterial peptidoglycans, probably deubiquitinates RIPK2. Can also inhibit I-kappa-B-kinase (IKK) through a non-catalytic mechanism which involves polyubiquitin; polyubiquitin promotes association with IKBKG and prevents IKK MAP3K7-mediated phosphorylation. Targets TRAF2 for lysosomal degradation. In vitro able to deubiquitinate 'Lys-11'-, 'Lys-48'- and 'Lys-63' polyubiquitin chains. Inhibitor of programmed cell death. Has a role in the function of the lymphoid system. Required for LPS-induced production of pro-inflammatory cytokines and IFN beta in LPS-tolerized macrophages. This Mus musculus (Mouse) protein is Tumor necrosis factor alpha-induced protein 3 (Tnfaip3).